Consider the following 181-residue polypeptide: Adenylate kinase (181 aa).

10–15 (GAGKGT) lines the ATP pocket. The interval 30–59 (STGDLFRDNITNETELGVEAKRYLDAGDLV) is NMP. Residues Thr-31, Arg-36, 57–59 (DLV), 85–88 (GYPR), and Gln-92 each bind AMP. Residues 126–132 (GRGRADD) form an LID region. Position 127 (Arg-127) interacts with ATP. AMP contacts are provided by Arg-129 and Arg-140. Gly-166 is a binding site for ATP.

This sequence belongs to the adenylate kinase family. In terms of assembly, monomer.

Its subcellular location is the cytoplasm. The catalysed reaction is AMP + ATP = 2 ADP. The protein operates within purine metabolism; AMP biosynthesis via salvage pathway; AMP from ADP: step 1/1. Its function is as follows. Catalyzes the reversible transfer of the terminal phosphate group between ATP and AMP. Plays an important role in cellular energy homeostasis and in adenine nucleotide metabolism. The polypeptide is Adenylate kinase (Mycobacterium sp. (strain MCS)).